The following is a 334-amino-acid chain: Holliday junction branch migration complex subunit RuvB (334 aa).

Positions 4-184 (ADRLIQPQLQ…FGIPLRLEFY (181 aa)) are large ATPase domain (RuvB-L). ATP-binding positions include Arg24, Gly65, Lys68, Thr69, Thr70, 131 to 133 (EDY), Arg174, Tyr184, and Arg221. A Mg(2+)-binding site is contributed by Thr69. Residues 185–255 (NIKDLSTIVT…VADHALDLLD (71 aa)) are small ATPAse domain (RuvB-S). Positions 258–334 (NEGFDYMDRK…YQHFQLIKPE (77 aa)) are head domain (RuvB-H). Residues Arg294, Arg313, and Arg318 each contribute to the DNA site.

The protein belongs to the RuvB family. In terms of assembly, homohexamer. Forms an RuvA(8)-RuvB(12)-Holliday junction (HJ) complex. HJ DNA is sandwiched between 2 RuvA tetramers; dsDNA enters through RuvA and exits via RuvB. An RuvB hexamer assembles on each DNA strand where it exits the tetramer. Each RuvB hexamer is contacted by two RuvA subunits (via domain III) on 2 adjacent RuvB subunits; this complex drives branch migration. In the full resolvosome a probable DNA-RuvA(4)-RuvB(12)-RuvC(2) complex forms which resolves the HJ.

It localises to the cytoplasm. The enzyme catalyses ATP + H2O = ADP + phosphate + H(+). The RuvA-RuvB-RuvC complex processes Holliday junction (HJ) DNA during genetic recombination and DNA repair, while the RuvA-RuvB complex plays an important role in the rescue of blocked DNA replication forks via replication fork reversal (RFR). RuvA specifically binds to HJ cruciform DNA, conferring on it an open structure. The RuvB hexamer acts as an ATP-dependent pump, pulling dsDNA into and through the RuvAB complex. RuvB forms 2 homohexamers on either side of HJ DNA bound by 1 or 2 RuvA tetramers; 4 subunits per hexamer contact DNA at a time. Coordinated motions by a converter formed by DNA-disengaged RuvB subunits stimulates ATP hydrolysis and nucleotide exchange. Immobilization of the converter enables RuvB to convert the ATP-contained energy into a lever motion, pulling 2 nucleotides of DNA out of the RuvA tetramer per ATP hydrolyzed, thus driving DNA branch migration. The RuvB motors rotate together with the DNA substrate, which together with the progressing nucleotide cycle form the mechanistic basis for DNA recombination by continuous HJ branch migration. Branch migration allows RuvC to scan DNA until it finds its consensus sequence, where it cleaves and resolves cruciform DNA. The chain is Holliday junction branch migration complex subunit RuvB from Shewanella putrefaciens (strain CN-32 / ATCC BAA-453).